The following is a 343-amino-acid chain: Transcription factor MYB11 (343 aa).

2 HTH myb-type domains span residues 9-61 (KVGI…INYL) and 62-116 (RSDI…SRKL). 2 consecutive DNA-binding regions (H-T-H motif) follow at residues 37–61 (WRSL…INYL) and 89–112 (WSTI…NSHL). The segment at 126-146 (ANTVENAPPPPKRRPGRTSRS) is disordered.

Expressed in seedlings, roots, cotyledons, leaves and apical meristems.

The protein resides in the nucleus. Its function is as follows. Modulates overall growth by reducing the proliferation activity of meristematic cells and delaying development. Flavonol-specific transcription activator involved in the regulation of several genes of flavonoid biosynthesis. Activates the expression of CHS, CHI, F3H and FLS1. Confers tolerance to UV-B. The chain is Transcription factor MYB11 from Arabidopsis thaliana (Mouse-ear cress).